Consider the following 192-residue polypeptide: Rho-related protein racC (192 aa).

13 to 20 (GDGAVGKT) contacts GTP. The Effector region signature appears at 35–43 (YIPTVFDNY). GTP contacts are provided by residues 60-64 (DTAGQ) and 118-121 (TKLD). C189 bears the Cysteine methyl ester mark. A lipid anchor (S-geranylgeranyl cysteine) is attached at C189. Positions 190-192 (IVM) are cleaved as a propeptide — removed in mature form.

The protein belongs to the small GTPase superfamily. Rho family. Interacts with pakB.

The protein localises to the cell membrane. This Dictyostelium discoideum (Social amoeba) protein is Rho-related protein racC (racC).